Consider the following 311-residue polypeptide: MKALIFLGAIIAGVLSDEWSPMDPEEVAFEEAKCMEDHFGNDFGLAEKWMKWNLAESDGKTACYVKCLVEALGMYDKQAFQPNNIKRQYEAYKSDNGVDQAKSDAISNELGKIDAKDGKCESIAKGFIQVNNANKGVLEKIYLLDSSVRDAIYKKNPQIKPKGISIFRFCGKQFYQDGEAAYCNVRKHGFSDDPKFIKHSNCTTRGMRWMKKNGEMDESAILRGLHAVNENGKDDVVKKSLQNCKAKDESKARDYYKCIYDGLGEQLFMKVLDYIEVRSENYSYRLREATSKYDANAMRSKVKALDSEAKC.

Positions 1–16 are cleaved as a signal peptide; the sequence is MKALIFLGAIIAGVLS. Intrachain disulfides connect Cys-34-Cys-67 and Cys-63-Cys-120. ADP-binding residues include Ser-146, Arg-149, Tyr-153, and Lys-160. 3 disulfides stabilise this stretch: Cys-170/Cys-202, Cys-183/Cys-311, and Cys-244/Cys-258. The ADP site is built by Asn-281, Tyr-282, and Ser-283.

It belongs to the PBP/GOBP family. Distal lateral and medial lobes of female mosquito salivary gland (at protein level). Expressed in the head and thorax of the female mosquitoes, where the salivary glands are located. Expressed in salivary gland. Not detected in the female mosquito abdomen. Not detected in the male mosquito tissues.

It localises to the secreted. Functionally, modulates blood feeding of female mosquitoes on vertebrate species by binding and sequestering different mediators involved in the host response. Binds adenine, adenosine, AMP, ADP and ATP, with the highest affinity to ATP and ADP. Inhibits agonist-induced platelet aggregation and hemostasis. This chain is Long form salivary protein D7L1, found in Culex quinquefasciatus (Southern house mosquito).